The primary structure comprises 180 residues: MKSLYFVAGLFVMLVQGSWQRSLQNTEEKSSSFPAPQTDPLGDPDQINEDKRHSQGTFTSDYSKYLDSRRAQDFVQWLMNTKRNKNNIAKRHDEFERHAEGTFTSDVSSYLEGQAAKEFIAWLVKGRGRRDFPEEVNIVEELRRRHADGSFSDEMNTVLDSLATRDFINWLLQTKITDRK.

The N-terminal stretch at 1 to 20 is a signal peptide; the sequence is MKSLYFVAGLFVMLVQGSWQ. Over residues 25 to 35 the composition is skewed to polar residues; it reads NTEEKSSSFPA. The disordered stretch occupies residues 25–59; it reads NTEEKSSSFPAPQTDPLGDPDQINEDKRHSQGTFT. At serine 54 the chain carries Phosphoserine. Residues 84 to 89 constitute a propeptide that is removed on maturation; it reads NKNNIA. Phosphoserine occurs at positions 105 and 108. An Arginine amide modification is found at arginine 127. The propeptide occupies 131–145; it reads DFPEEVNIVEELRRR. Residues serine 150 and serine 152 each carry the phosphoserine modification.

It belongs to the glucagon family. In terms of processing, proglucagon is post-translationally processed in a tissue-specific manner in pancreatic A cells and intestinal L cells. In pancreatic A cells, the major bioactive hormone is glucagon cleaved by PCSK2/PC2. In the intestinal L cells PCSK1/PC1 liberates GLP-1, GLP-2, glicentin and oxyntomodulin. GLP-1 is further N-terminally truncated by post-translational processing in the intestinal L cells resulting in GLP-1(7-37) GLP-1-(7-36)amide. The C-terminal amidation is neither important for the metabolism of GLP-1 nor for its effects on the endocrine pancreas. Glucagon is secreted in the A cells of the islets of Langerhans. GLP-1, GLP-2, oxyntomodulin and glicentin are secreted from enteroendocrine cells throughout the gastrointestinal tract.

The protein resides in the secreted. Functionally, plays a key role in glucose metabolism and homeostasis. Regulates blood glucose by increasing gluconeogenesis and decreasing glycolysis. A counterregulatory hormone of insulin, raises plasma glucose levels in response to insulin-induced hypoglycemia. Plays an important role in initiating and maintaining hyperglycemic conditions in diabetes. Potent stimulator of glucose-dependent insulin release. Also stimulates insulin release in response to IL6. Plays important roles on gastric motility and the suppression of plasma glucagon levels. May be involved in the suppression of satiety and stimulation of glucose disposal in peripheral tissues, independent of the actions of insulin. Has growth-promoting activities on intestinal epithelium. May also regulate the hypothalamic pituitary axis (HPA) via effects on LH, TSH, CRH, oxytocin, and vasopressin secretion. Increases islet mass through stimulation of islet neogenesis and pancreatic beta cell proliferation. Inhibits beta cell apoptosis. Its function is as follows. Stimulates intestinal growth and up-regulates villus height in the small intestine, concomitant with increased crypt cell proliferation and decreased enterocyte apoptosis. The gastrointestinal tract, from the stomach to the colon is the principal target for GLP-2 action. Plays a key role in nutrient homeostasis, enhancing nutrient assimilation through enhanced gastrointestinal function, as well as increasing nutrient disposal. Stimulates intestinal glucose transport and decreases mucosal permeability. In terms of biological role, significantly reduces food intake. Inhibits gastric emptying in humans. Suppression of gastric emptying may lead to increased gastric distension, which may contribute to satiety by causing a sensation of fullness. Functionally, may modulate gastric acid secretion and the gastro-pyloro-duodenal activity. May play an important role in intestinal mucosal growth in the early period of life. The polypeptide is Pro-glucagon (GCG) (Bos taurus (Bovine)).